Reading from the N-terminus, the 141-residue chain is Nucleoside diphosphate kinase (141 aa).

ATP-binding residues include Lys-11, Phe-59, Arg-87, Thr-93, Arg-104, and Asn-114. The active-site Pros-phosphohistidine intermediate is the His-117.

The protein belongs to the NDK family. As to quaternary structure, homotetramer. The cofactor is Mg(2+).

The protein resides in the cytoplasm. It carries out the reaction a 2'-deoxyribonucleoside 5'-diphosphate + ATP = a 2'-deoxyribonucleoside 5'-triphosphate + ADP. The enzyme catalyses a ribonucleoside 5'-diphosphate + ATP = a ribonucleoside 5'-triphosphate + ADP. Major role in the synthesis of nucleoside triphosphates other than ATP. The ATP gamma phosphate is transferred to the NDP beta phosphate via a ping-pong mechanism, using a phosphorylated active-site intermediate. The sequence is that of Nucleoside diphosphate kinase from Pseudomonas putida (strain ATCC 47054 / DSM 6125 / CFBP 8728 / NCIMB 11950 / KT2440).